The following is a 349-amino-acid chain: Hydroxymethylglutaryl-CoA synthase (349 aa).

Residues D30 and A31 each coordinate (3S)-3-hydroxy-3-methylglutaryl-CoA. The active-site Proton donor/acceptor is E82. The (3S)-3-hydroxy-3-methylglutaryl-CoA site is built by C114 and T155. C114 acts as the Acyl-thioester intermediate in catalysis. A CoA-binding site is contributed by R203. Residues T205 and H238 each contribute to the (3S)-3-hydroxy-3-methylglutaryl-CoA site. Catalysis depends on H238, which acts as the Proton donor/acceptor. K243 provides a ligand contact to CoA. Residues N270 and S300 each contribute to the (3S)-3-hydroxy-3-methylglutaryl-CoA site.

It belongs to the thiolase-like superfamily. Archaeal HMG-CoA synthase family. In terms of assembly, interacts with acetoacetyl-CoA thiolase that catalyzes the precedent step in the pathway and with a DUF35 protein. The acetoacetyl-CoA thiolase/HMG-CoA synthase complex channels the intermediate via a fused CoA-binding site, which allows for efficient coupling of the endergonic thiolase reaction with the exergonic HMGCS reaction.

It catalyses the reaction acetoacetyl-CoA + acetyl-CoA + H2O = (3S)-3-hydroxy-3-methylglutaryl-CoA + CoA + H(+). Its pathway is metabolic intermediate biosynthesis; (R)-mevalonate biosynthesis; (R)-mevalonate from acetyl-CoA: step 2/3. In terms of biological role, catalyzes the condensation of acetyl-CoA with acetoacetyl-CoA to form 3-hydroxy-3-methylglutaryl-CoA (HMG-CoA). Functions in the mevalonate (MVA) pathway leading to isopentenyl diphosphate (IPP), a key precursor for the biosynthesis of isoprenoid compounds that are building blocks of archaeal membrane lipids. The sequence is that of Hydroxymethylglutaryl-CoA synthase from Methanococcus maripaludis (strain C5 / ATCC BAA-1333).